The following is a 195-amino-acid chain: MPKPTKGPRLGGSSSHQKALLANLATSLFEHGRIKTTEPKARALRPYAEKLITHAKKGELHNRREVMKKIRDKDVVHTLFAEIGPFFADREGGYTRIIKVEPRKGDNAPMAVIELVREKTVTSEANRARRVGASKQTAPVAAAAAPQAAVEPEATEGPDADDSSALPEAEDTTASEASRSTETDDPTQDSDADKS.

The interval 125–195 (ANRARRVGAS…PTQDSDADKS (71 aa)) is disordered. Over residues 136 to 152 (QTAPVAAAAAPQAAVEP) the composition is skewed to low complexity. Acidic residues-rich tracts occupy residues 153–173 (EATE…EDTT) and 183–195 (TDDP…ADKS).

Belongs to the bacterial ribosomal protein bL17 family. As to quaternary structure, part of the 50S ribosomal subunit. Contacts protein L32.

The sequence is that of Large ribosomal subunit protein bL17 from Mycobacterium sp. (strain JLS).